The sequence spans 351 residues: Glycerol-3-phosphate dehydrogenase 1-like protein (351 aa).

Position 12–17 (12–17 (GSGNWG)) interacts with NAD(+). K122 contributes to the substrate binding site. A155 provides a ligand contact to NAD(+). K206 acts as the Proton acceptor in catalysis. The NAD(+) site is built by R271, K298, and Q300. Residue 271-272 (RN) coordinates substrate.

Belongs to the NAD-dependent glycerol-3-phosphate dehydrogenase family. As to quaternary structure, interacts with SCN5A. Most highly expressed in heart tissue, with lower levels in the skeletal muscle, kidney, lung and other organs.

The protein resides in the cytoplasm. It catalyses the reaction sn-glycerol 3-phosphate + NAD(+) = dihydroxyacetone phosphate + NADH + H(+). Plays a role in regulating cardiac sodium current; decreased enzymatic activity with resulting increased levels of glycerol 3-phosphate activating the DPD1L-dependent SCN5A phosphorylation pathway, may ultimately lead to decreased sodium current; cardiac sodium current may also be reduced due to alterations of NAD(H) balance induced by DPD1L. This chain is Glycerol-3-phosphate dehydrogenase 1-like protein, found in Homo sapiens (Human).